The sequence spans 294 residues: Cytidine deaminase (294 aa).

CMP/dCMP-type deaminase domains lie at 48-168 and 186-294; these read DEDA…FGPK and LTGD…TLLA. 89–91 contacts substrate; it reads NME. His-102 contributes to the Zn(2+) binding site. Glu-104 functions as the Proton donor in the catalytic mechanism. Positions 129 and 132 each coordinate Zn(2+).

The protein belongs to the cytidine and deoxycytidylate deaminase family. In terms of assembly, homodimer. Zn(2+) is required as a cofactor.

The enzyme catalyses cytidine + H2O + H(+) = uridine + NH4(+). The catalysed reaction is 2'-deoxycytidine + H2O + H(+) = 2'-deoxyuridine + NH4(+). Its function is as follows. This enzyme scavenges exogenous and endogenous cytidine and 2'-deoxycytidine for UMP synthesis. The polypeptide is Cytidine deaminase (Enterobacter sp. (strain 638)).